The following is a 600-amino-acid chain: Zinc metalloproteinase-disintegrin-like stejnihagin-B (600 aa).

The first 20 residues, 1 to 20, serve as a signal peptide directing secretion; the sequence is MIEVLLVTICLAVFPYQGSS. A propeptide spanning residues 21–191 is cleaved from the precursor; sequence IILESGNVND…KASQLVVTAE (171 aa). The residue at position 192 (Q192) is a Pyrrolidone carboxylic acid. Positions 198-389 constitute a Peptidase M12B domain; sequence RYVKLAIVAD…YNPQCILNAL (192 aa). N-linked (GlcNAc...) asparagine glycans are attached at residues N261 and N317. Intrachain disulfides connect C306–C384, C346–C368, and C348–C351. H331 provides a ligand contact to Zn(2+). E332 is a catalytic residue. Positions 335 and 341 each coordinate Zn(2+). The 87-residue stretch at 397–483 folds into the Disintegrin domain; it reads PPVCGNELLE…DCPTDSFHRN (87 aa). Ca(2+) is bound by residues V399, N402, L404, E406, E409, and D412. Cystine bridges form between C400/C429, C411/C424, C413/C419, C423/C446, C437/C443, C442/C468, C455/C475, C462/C494, C487/C499, C506/C556, C521/C565, C534/C544, C551/C587, and C581/C593. N-linked (GlcNAc...) asparagine glycosylation is present at N425. The D/ECD-tripeptide motif lies at 461-463; sequence ECD. An N-linked (GlcNAc...) asparagine glycan is attached at N467. N-linked (GlcNAc...) asparagine glycosylation occurs at N513.

This sequence belongs to the venom metalloproteinase (M12B) family. P-III subfamily. P-IIIa sub-subfamily. In terms of assembly, monomer. It depends on Zn(2+) as a cofactor. In terms of tissue distribution, expressed by the venom gland.

Its subcellular location is the secreted. Functionally, this metalloproteinase-disintegrin-like impairs hemostasis in the envenomed animal. The sequence is that of Zinc metalloproteinase-disintegrin-like stejnihagin-B from Trimeresurus stejnegeri (Chinese green tree viper).